Consider the following 393-residue polypeptide: S-adenosylmethionine synthase (393 aa).

His17 contributes to the ATP binding site. Residue Asp19 participates in Mg(2+) binding. Glu45 contributes to the K(+) binding site. 2 residues coordinate L-methionine: Glu58 and Gln106. Residues Gln106–Ala116 form a flexible loop region. ATP-binding positions include Asp171 to Lys173, Asp246, Arg252 to Lys253, Ala269, and Lys273. L-methionine is bound at residue Asp246. Position 277 (Lys277) interacts with L-methionine.

The protein belongs to the AdoMet synthase family. As to quaternary structure, homotetramer; dimer of dimers. It depends on Mg(2+) as a cofactor. K(+) is required as a cofactor.

It is found in the cytoplasm. The enzyme catalyses L-methionine + ATP + H2O = S-adenosyl-L-methionine + phosphate + diphosphate. Its pathway is amino-acid biosynthesis; S-adenosyl-L-methionine biosynthesis; S-adenosyl-L-methionine from L-methionine: step 1/1. Functionally, catalyzes the formation of S-adenosylmethionine (AdoMet) from methionine and ATP. The overall synthetic reaction is composed of two sequential steps, AdoMet formation and the subsequent tripolyphosphate hydrolysis which occurs prior to release of AdoMet from the enzyme. This Roseobacter denitrificans (strain ATCC 33942 / OCh 114) (Erythrobacter sp. (strain OCh 114)) protein is S-adenosylmethionine synthase.